The sequence spans 95 residues: MSRSSKKGPYVDIRLLNRIEELNRANEKRVLRTWSRDSTIFPQMVGHTIAVHDGRRHVPVYITENMVGHKLGEFAPTRSFRGHGGKKADKRGKMK.

The segment at alanine 75–lysine 95 is disordered. Basic residues predominate over residues phenylalanine 80–lysine 95.

The protein belongs to the universal ribosomal protein uS19 family.

Its function is as follows. Protein S19 forms a complex with S13 that binds strongly to the 16S ribosomal RNA. This Roseiflexus sp. (strain RS-1) protein is Small ribosomal subunit protein uS19.